A 117-amino-acid chain; its full sequence is MARVKRGVIARARHKKVLKQAKGYYGARSRVYRVAVQAVTKAGQYAYRDRRNKKRQFRQLWIVRINAAARQNGLSYSRFINGLKKASIEIDRKILADIAVHDQNGFAALVEKAKGAL.

Belongs to the bacterial ribosomal protein bL20 family.

Binds directly to 23S ribosomal RNA and is necessary for the in vitro assembly process of the 50S ribosomal subunit. It is not involved in the protein synthesizing functions of that subunit. The chain is Large ribosomal subunit protein bL20 from Idiomarina loihiensis (strain ATCC BAA-735 / DSM 15497 / L2-TR).